The primary structure comprises 351 residues: Homeobox protein rough sheath 1 (351 aa).

Disordered regions lie at residues 1–23 (MDQSFGNLGAGAGSSSGGSNSKA), 57–82 (AAAPSSSQQHQQQQHHHHYARHGAEM), and 187–229 (GGGS…PRAE). Residues 57 to 68 (AAAPSSSQQHQQ) are compositionally biased toward low complexity. Over residues 214–229 (PNGRENDPPEIDPRAE) the composition is skewed to basic and acidic residues. The ELK domain maps to 232–252 (ELKYQLLKKYSGYLSSLRQEF). Residues 253–316 (SKKKKKGKLP…NQRKRHWKPS (64 aa)) constitute a DNA-binding region (homeobox; TALE-type).

It belongs to the TALE/KNOX homeobox family.

It is found in the nucleus. Plays a possible role in patterning the placement of lateral organs along the axis of the shoot. Mutations in RS1 alters cell fate and causes unregulated cell division and expansion in the leaf. Probably binds to the DNA sequence 5'-TGAC-3'. In Zea mays (Maize), this protein is Homeobox protein rough sheath 1 (RS1).